A 693-amino-acid chain; its full sequence is Elongation factor G (693 aa).

Positions 8–283 (NRCRNIGIMA…AVVDYLPSPL (276 aa)) constitute a tr-type G domain. Residues 17–24 (AHIDAGKT), 81–85 (DTPGH), and 135–138 (NKMD) contribute to the GTP site.

This sequence belongs to the TRAFAC class translation factor GTPase superfamily. Classic translation factor GTPase family. EF-G/EF-2 subfamily.

The protein localises to the cytoplasm. Catalyzes the GTP-dependent ribosomal translocation step during translation elongation. During this step, the ribosome changes from the pre-translocational (PRE) to the post-translocational (POST) state as the newly formed A-site-bound peptidyl-tRNA and P-site-bound deacylated tRNA move to the P and E sites, respectively. Catalyzes the coordinated movement of the two tRNA molecules, the mRNA and conformational changes in the ribosome. This is Elongation factor G from Acidobacterium capsulatum (strain ATCC 51196 / DSM 11244 / BCRC 80197 / JCM 7670 / NBRC 15755 / NCIMB 13165 / 161).